The primary structure comprises 491 residues: Ligand-gated ion channel 50 (491 aa).

Residues 1–19 (MRFLLVLQLVFFYFSAATT) form the signal peptide. N-linked (GlcNAc...) asparagine glycosylation is found at Asn-55 and Asn-101. Cys-157 and Cys-171 form a disulfide bridge. The next 3 helical transmembrane spans lie at 241 to 261 (LFQS…GFFF), 265 to 287 (SVSA…FGNV), and 302 to 322 (VWMI…AIVC). N-linked (GlcNAc...) asparagine glycosylation is present at Asn-418. A helical transmembrane segment spans residues 465–485 (MIMFPLSFLIFNVVYWSIYFM).

This sequence belongs to the ligand-gated ion channel (TC 1.A.9) family.

It localises to the postsynaptic cell membrane. The protein localises to the cell membrane. This chain is Ligand-gated ion channel 50 (lgc-50), found in Caenorhabditis elegans.